Consider the following 352-residue polypeptide: Lipoyl synthase (352 aa).

The tract at residues 1–21 (MTSVDTPTPHGGTPAPAPATA) is disordered. Residues Cys-71, Cys-76, Cys-82, Cys-97, Cys-101, Cys-104, and Ser-308 each coordinate [4Fe-4S] cluster. A Radical SAM core domain is found at 83–297 (WEDREATFLI…SRVAEEIGFA (215 aa)).

This sequence belongs to the radical SAM superfamily. Lipoyl synthase family. Requires [4Fe-4S] cluster as cofactor.

The protein localises to the cytoplasm. The catalysed reaction is [[Fe-S] cluster scaffold protein carrying a second [4Fe-4S](2+) cluster] + N(6)-octanoyl-L-lysyl-[protein] + 2 oxidized [2Fe-2S]-[ferredoxin] + 2 S-adenosyl-L-methionine + 4 H(+) = [[Fe-S] cluster scaffold protein] + N(6)-[(R)-dihydrolipoyl]-L-lysyl-[protein] + 4 Fe(3+) + 2 hydrogen sulfide + 2 5'-deoxyadenosine + 2 L-methionine + 2 reduced [2Fe-2S]-[ferredoxin]. It functions in the pathway protein modification; protein lipoylation via endogenous pathway; protein N(6)-(lipoyl)lysine from octanoyl-[acyl-carrier-protein]: step 2/2. Catalyzes the radical-mediated insertion of two sulfur atoms into the C-6 and C-8 positions of the octanoyl moiety bound to the lipoyl domains of lipoate-dependent enzymes, thereby converting the octanoylated domains into lipoylated derivatives. The chain is Lipoyl synthase from Nocardia farcinica (strain IFM 10152).